The following is a 243-amino-acid chain: Phosphoribosyl isomerase A (243 aa).

The Proton acceptor role is filled by aspartate 9. The Proton donor role is filled by aspartate 128.

Belongs to the HisA/HisF family.

It localises to the cytoplasm. It carries out the reaction 1-(5-phospho-beta-D-ribosyl)-5-[(5-phospho-beta-D-ribosylamino)methylideneamino]imidazole-4-carboxamide = 5-[(5-phospho-1-deoxy-D-ribulos-1-ylimino)methylamino]-1-(5-phospho-beta-D-ribosyl)imidazole-4-carboxamide. The enzyme catalyses N-(5-phospho-beta-D-ribosyl)anthranilate = 1-(2-carboxyphenylamino)-1-deoxy-D-ribulose 5-phosphate. Its pathway is amino-acid biosynthesis; L-histidine biosynthesis; L-histidine from 5-phospho-alpha-D-ribose 1-diphosphate: step 4/9. It functions in the pathway amino-acid biosynthesis; L-tryptophan biosynthesis; L-tryptophan from chorismate: step 3/5. Involved in both the histidine and tryptophan biosynthetic pathways. This chain is Phosphoribosyl isomerase A, found in Mycolicibacterium paratuberculosis (strain ATCC BAA-968 / K-10) (Mycobacterium paratuberculosis).